A 213-amino-acid polypeptide reads, in one-letter code: ATP-dependent dethiobiotin synthetase BioD (213 aa).

ATP is bound at residue Gly13–Val18. A Mg(2+)-binding site is contributed by Thr17. The active site involves Lys33. Glu100 is a Mg(2+) binding site. ATP contacts are provided by residues Glu100–Gly103 and Pro184–Leu186.

Belongs to the dethiobiotin synthetase family. In terms of assembly, homodimer. It depends on Mg(2+) as a cofactor.

It localises to the cytoplasm. It catalyses the reaction (7R,8S)-7,8-diammoniononanoate + CO2 + ATP = (4R,5S)-dethiobiotin + ADP + phosphate + 3 H(+). It functions in the pathway cofactor biosynthesis; biotin biosynthesis; biotin from 7,8-diaminononanoate: step 1/2. Its function is as follows. Catalyzes a mechanistically unusual reaction, the ATP-dependent insertion of CO2 between the N7 and N8 nitrogen atoms of 7,8-diaminopelargonic acid (DAPA, also called 7,8-diammoniononanoate) to form a ureido ring. This Rhodopseudomonas palustris (strain BisA53) protein is ATP-dependent dethiobiotin synthetase BioD.